A 295-amino-acid chain; its full sequence is Bifunctional protein FolD (295 aa).

NADP(+)-binding positions include Gly164–Ser166, Ser193, and Ile234.

Belongs to the tetrahydrofolate dehydrogenase/cyclohydrolase family. In terms of assembly, homodimer.

It catalyses the reaction (6R)-5,10-methylene-5,6,7,8-tetrahydrofolate + NADP(+) = (6R)-5,10-methenyltetrahydrofolate + NADPH. It carries out the reaction (6R)-5,10-methenyltetrahydrofolate + H2O = (6R)-10-formyltetrahydrofolate + H(+). It participates in one-carbon metabolism; tetrahydrofolate interconversion. In terms of biological role, catalyzes the oxidation of 5,10-methylenetetrahydrofolate to 5,10-methenyltetrahydrofolate and then the hydrolysis of 5,10-methenyltetrahydrofolate to 10-formyltetrahydrofolate. This is Bifunctional protein FolD from Flavobacterium johnsoniae (strain ATCC 17061 / DSM 2064 / JCM 8514 / BCRC 14874 / CCUG 350202 / NBRC 14942 / NCIMB 11054 / UW101) (Cytophaga johnsonae).